The chain runs to 331 residues: 6-phosphogluconolactonase (331 aa).

Belongs to the cycloisomerase 2 family.

The catalysed reaction is 6-phospho-D-glucono-1,5-lactone + H2O = 6-phospho-D-gluconate + H(+). It participates in carbohydrate degradation; pentose phosphate pathway; D-ribulose 5-phosphate from D-glucose 6-phosphate (oxidative stage): step 2/3. Its function is as follows. Catalyzes the hydrolysis of 6-phosphogluconolactone to 6-phosphogluconate. This is 6-phosphogluconolactonase from Buchnera aphidicola subsp. Baizongia pistaciae (strain Bp).